We begin with the raw amino-acid sequence, 496 residues long: Cytochrome P450 monooxygenase claT (496 aa).

Residues 2–22 (LSLIVEATLLLVVLVLSAHYV) traverse the membrane as a helical segment. Position 423 (cysteine 423) interacts with heme.

This sequence belongs to the cytochrome P450 family. Requires heme as cofactor.

The protein resides in the membrane. It carries out the reaction wigandol + 4 reduced [NADPH--hemoprotein reductase] + 4 O2 = arnebinol A + 4 oxidized [NADPH--hemoprotein reductase] + 6 H2O + 4 H(+). It catalyses the reaction arnebinol A + reduced [NADPH--hemoprotein reductase] + O2 = clavilactone A + oxidized [NADPH--hemoprotein reductase] + H2O + H(+). The catalysed reaction is (2E)-geranylhydroquinone + reduced [NADPH--hemoprotein reductase] + O2 = isoalliodorol + oxidized [NADPH--hemoprotein reductase] + H2O + H(+). Its pathway is secondary metabolite biosynthesis; terpenoid biosynthesis. Functionally, cytochrome P450 monooxygenase; part of the gene cluster that mediates the biosynthesis of clavilactone A, a meroterpenoid that features a unique benzo-fused ten-membered carbocyclic ring unit with an alpha,beta-epoxy-gamma-lactone moiety, forming an intriguing 10/5/3 tricyclic nested skeleton. ClaR, ClaS and ClaT are sufficient to produce clavilactone A. Within the pathway, claT acts as a multifunctional cytochrome P450 monooxygenase that catalyzes a ten-electron oxidation to accomplish the biosynthesis of the 10/5/3 tricyclic nested skeleton in clavilactones. The biosynthesis begins with the prenyltransferase claS that transfers geranyl pyrophosphate (GPP) to hydroquinone to produces geranylhydroquinone. The cytochrome P450 monooxygenase claR then catalyzes the diradical coupling reaction between the intramolecular hydroquinone and allyl moieties to form the benzo-fused ten-membered carbocyclic ring unit of wigantol. Finally the cytochrome P450 monooxygenase claT exquisitely and stereoselectively assembles the alpha,beta-epoxy-gamma-lactone moiety, producing clavilactone A via arnebinol A. This Ampulloclitocybe clavipes (Club foot) protein is Cytochrome P450 monooxygenase claT.